Here is a 205-residue protein sequence, read N- to C-terminus: Outer-membrane lipoprotein LolB (205 aa).

Residues 1–17 form the signal peptide; the sequence is MFLRHFIVFSFIALLAG. Cys-18 carries the N-palmitoyl cysteine lipid modification. Residue Cys-18 is the site of S-diacylglycerol cysteine attachment.

This sequence belongs to the LolB family. As to quaternary structure, monomer.

Its subcellular location is the cell outer membrane. Functionally, plays a critical role in the incorporation of lipoproteins in the outer membrane after they are released by the LolA protein. The protein is Outer-membrane lipoprotein LolB of Pseudomonas fluorescens (strain ATCC BAA-477 / NRRL B-23932 / Pf-5).